A 175-amino-acid polypeptide reads, in one-letter code: COMPASS component SDC1 (175 aa).

The span at 1–12 (MNESENSPQHNE) shows a compositional bias: polar residues. The tract at residues 1–45 (MNESENSPQHNEVTVPMVEDTSSNADIPMEQIQREDNKNYDKHDN) is disordered. Residues 32–45 (IQREDNKNYDKHDN) show a composition bias toward basic and acidic residues. Residues 121-162 (QTRKYLNTNVTPHLLAGMRLIAVQQPEDPLRVLGEYLIEQSN) are DPY-30.

Belongs to the dpy-30 family. In terms of assembly, component of the Set1C/COMPASS complex which consists of SET1(2), BRE2(2), SPP1(2), SDC1(1), SHG1(1), SWD1(1), SWD2(1), and SWD3(1). Interacts directly with BRE2.

It is found in the nucleus. In terms of biological role, component of the Set1C/COMPASS complex that specifically mono-, di- and trimethylates histone H3 to form H3K4me1/2/3, which subsequently plays a role in telomere length maintenance and transcription elongation regulation. COMPASS recognizes ubiquitinated H2B on one face of the nucleosome which stimulates the methylation of H3 on the opposing face. This is COMPASS component SDC1 from Saccharomyces cerevisiae (strain ATCC 204508 / S288c) (Baker's yeast).